The following is a 250-amino-acid chain: Putative B3 domain-containing protein At4g03170 (250 aa).

The span at 1-12 (MANSTGKPTSST) shows a compositional bias: polar residues. Residues 1–90 (MANSTGKPTS…EKNQPKRFKK (90 aa)) form a disordered region. The span at 34 to 56 (DREEDIDDEDDIDDEVIDDEDYE) shows a compositional bias: acidic residues. The span at 72-84 (QSREREEETEKNQ) shows a compositional bias: basic and acidic residues. The TF-B3 DNA-binding region spans 137–245 (KKQLMSSDVD…KLCFAIHYVK (109 aa)).

Its subcellular location is the nucleus. The chain is Putative B3 domain-containing protein At4g03170 from Arabidopsis thaliana (Mouse-ear cress).